The sequence spans 330 residues: DNA-binding death effector domain-containing protein 2 (330 aa).

One can recognise a DED domain in the interval 25–104 (SLHRMFEVVG…RHDLLPHLAR (80 aa)). A Nuclear localization signal motif is present at residues 104–109 (RKRRRP). Residues 104–195 (RKRRRPVSPE…HQELGRPSSE (92 aa)) are disordered. Low complexity predominate over residues 137–147 (ASSSSDSPQSQ). The short motif at 156 to 174 (KRQRRSRGRPSSGARQRRR) is the Bipartite nuclear localization signal element.

Interacts with CASP8, CASP10 and GTF3C3. Homodimerizes and heterodimerizes with DEDD. In terms of tissue distribution, expression is high in liver, heart, kidney, and testis but low in brain, spleen, lung, and skeleton muscle.

It localises to the nucleus. The protein resides in the nucleolus. Its function is as follows. May play a critical role in death receptor-induced apoptosis and may target CASP8 and CASP10 to the nucleus. May regulate degradation of intermediate filaments during apoptosis. May play a role in the general transcription machinery in the nucleus and might be an important regulator of the activity of GTF3C3. This chain is DNA-binding death effector domain-containing protein 2 (Dedd2), found in Mus musculus (Mouse).